The chain runs to 1050 residues: FHIP family protein GE18198 (1050 aa).

A phosphoserine mark is found at serine 498 and serine 805. Disordered stretches follow at residues 800 to 827 (KGNE…GQLR), 865 to 888 (TSMF…SASS), 911 to 954 (TDGR…SGSN), and 968 to 995 (SNTT…SEPA). Over residues 808–826 (HHSQQQQMATNSGQQQGQL) the composition is skewed to polar residues. The span at 872-888 (SASNTSTTPPNGSSASS) shows a compositional bias: low complexity. The segment covering 918–935 (HAQTSAGTCETSLSTQPQ) has biased composition (polar residues). Residues 941-954 (TGAIATSATASGSN) are compositionally biased toward low complexity. A compositionally biased stretch (polar residues) spans 968–977 (SNTTTHSAST).

It belongs to the FHIP family.

The chain is FHIP family protein GE18198 from Drosophila yakuba (Fruit fly).